A 1211-amino-acid chain; its full sequence is Diacylglycerol kinase eta (1211 aa).

Positions 1–66 are disordered; sequence MAGAGSQHHP…QMRTKTSIKE (66 aa). Residues 19–32 show a composition bias toward low complexity; sequence AGASAVSPTAAGPG. Over residues 52–61 the composition is skewed to polar residues; it reads VSTSGQMRTK. Residues 62–155 form the PH domain; sequence TSIKEGQLLK…WISSLKSVQS (94 aa). 2 Phorbol-ester/DAG-type zinc fingers span residues 172–222 and 244–295; these read MHNW…TNNC and PHQW…HPVC. The region spanning 325–460 is the DAGKc domain; it reads FCVSPLLVFV…LDRWSIMTYE (136 aa). Disordered regions lie at residues 562–613 and 634–694; these read SQAS…KPRE and KVMD…SVAG. 2 stretches are compositionally biased toward acidic residues: residues 576-589 and 653-662; these read PEED…DESL and YDTETDEAKE. The span at 670 to 691 shows a compositional bias: polar residues; that stretch reads SAKTTSQSPDAQASCGHPQTDS. Positions 1143-1206 constitute an SAM domain; sequence WGTEEVAAWL…LQGIKELERN (64 aa).

This sequence belongs to the eukaryotic diacylglycerol kinase family. Interacts with RAF1 and BRAF. In terms of assembly, homooligomers. Heterooligomers. Oligomerization through the SAM domain inhibits the diacylglycerol kinase activity. Heterooligomerizes with SAM domain-containing isoforms of DGKD. As to quaternary structure, does not form homooligomers. In terms of processing, phosphorylated. Phosphorylation does not inhibit catalytic activity. Widely expressed. Detected in the granulosa cells of the primary and secondary follicles. Expressed in mature follicles and corpus lutea. Expressed in the oviductal epithelium. In the uterus, strongly expressed in the luminal epithelium. Detected in the uterine glands. As to expression, detected in ovary and uterus (at protein level). In terms of tissue distribution, specifically expressed in testis. Detected in the inner area of the testis. Strongly expressed in the secondary spermatocytes and the round spermatids and weakly detected in the primary spermatocytes.

Its subcellular location is the cytoplasm. The protein resides in the cell membrane. The protein localises to the cytoskeleton. It carries out the reaction a 1,2-diacyl-sn-glycerol + ATP = a 1,2-diacyl-sn-glycero-3-phosphate + ADP + H(+). It catalyses the reaction 1,2-di-(9Z-octadecenoyl)-sn-glycerol + ATP = 1,2-di-(9Z-octadecenoyl)-sn-glycero-3-phosphate + ADP + H(+). The protein operates within lipid metabolism; glycerolipid metabolism. Diacylglycerol kinase that converts diacylglycerol/DAG into phosphatidic acid/phosphatidate/PA and regulates the respective levels of these two bioactive lipids. Thereby, acts as a central switch between the signaling pathways activated by these second messengers with different cellular targets and opposite effects in numerous biological processes. Plays a key role in promoting cell growth. Activates the Ras/B-Raf/C-Raf/MEK/ERK signaling pathway induced by EGF. Regulates the recruitment of RAF1 and BRAF from cytoplasm to membranes and their heterodimerization. The chain is Diacylglycerol kinase eta from Mus musculus (Mouse).